The following is a 189-amino-acid chain: RNA-binding protein (189 aa).

The C4-type zinc-finger motif lies at 55–69; the sequence is CICPSSNHLVDDCVC. A disordered region spans residues 114–189; sequence FLTSVNPGES…DANTRKSKRK (76 aa). The segment covering 158 to 167 has biased composition (basic and acidic residues); sequence SSSERKRKEY. Residues 168–180 show a composition bias toward low complexity; the sequence is SSNSETDLSSDSD.

Belongs to the phytoreovirus RNA-binding protein family.

The protein resides in the host cytoplasm. Constituent of viral factories. Binds to ssRNA and dsRNA. In Alopecurus aequalis (Barnyard grass), this protein is RNA-binding protein.